The primary structure comprises 78 residues: MSEVVVKEQLEQYISKIERLEQEKADLSQEVKDIFQDASAHGFDVKAMKSILKLKKLDKDKLAEQDAMLELYRDTLGI.

Belongs to the UPF0335 family.

This chain is UPF0335 protein A1C_00850, found in Rickettsia akari (strain Hartford).